Reading from the N-terminus, the 390-residue chain is Trehalose-phosphate phosphatase (390 aa).

The Nucleophile role is filled by aspartate 150. Aspartate 150, aspartate 152, and aspartate 333 together coordinate Mg(2+). 150 to 152 (DFD) is a substrate binding site.

This sequence belongs to the trehalose phosphatase family. Mg(2+) serves as cofactor.

It carries out the reaction alpha,alpha-trehalose 6-phosphate + H2O = alpha,alpha-trehalose + phosphate. It participates in glycan biosynthesis; trehalose biosynthesis. Its function is as follows. Removes the phosphate from trehalose 6-phosphate to produce free trehalose. The chain is Trehalose-phosphate phosphatase (otsB) from Mycobacterium ulcerans (strain Agy99).